We begin with the raw amino-acid sequence, 465 residues long: ATP synthase subunit beta (465 aa).

Residue 153–160 (GGAGVGKT) coordinates ATP.

It belongs to the ATPase alpha/beta chains family. In terms of assembly, F-type ATPases have 2 components, CF(1) - the catalytic core - and CF(0) - the membrane proton channel. CF(1) has five subunits: alpha(3), beta(3), gamma(1), delta(1), epsilon(1). CF(0) has three main subunits: a(1), b(2) and c(9-12). The alpha and beta chains form an alternating ring which encloses part of the gamma chain. CF(1) is attached to CF(0) by a central stalk formed by the gamma and epsilon chains, while a peripheral stalk is formed by the delta and b chains.

The protein resides in the cell membrane. It catalyses the reaction ATP + H2O + 4 H(+)(in) = ADP + phosphate + 5 H(+)(out). Produces ATP from ADP in the presence of a proton gradient across the membrane. The catalytic sites are hosted primarily by the beta subunits. The sequence is that of ATP synthase subunit beta from Clostridium perfringens (strain SM101 / Type A).